A 425-amino-acid polypeptide reads, in one-letter code: Ribulose bisphosphate carboxylase/oxygenase activase B, chloroplastic (425 aa).

The N-terminal 43 residues, 1–43 (MASAFSSTVGAPASTPTIFLGKKVKNYYHGGNKMKSRVVRVMA), are a transit peptide targeting the chloroplast. 153–160 (GGKGQGKS) contributes to the ATP binding site.

The protein belongs to the RuBisCO activase family.

It localises to the plastid. The protein localises to the chloroplast stroma. Activation of RuBisCO (ribulose-1,5-bisphosphate carboxylase/oxygenase; EC 4.1.1.39) involves the ATP-dependent carboxylation of the epsilon-amino group of lysine leading to a carbamate structure. This Hordeum vulgare (Barley) protein is Ribulose bisphosphate carboxylase/oxygenase activase B, chloroplastic (RCAB).